The following is a 145-amino-acid chain: Large ribosomal subunit protein cL37 (145 aa).

A chloroplast-targeting transit peptide spans 1-63 (MALLCFNSFT…PRKNSIFIAS (63 aa)). The interval 125 to 145 (KRRLRKKGNWPPSKMKKLEGV) is disordered.

Belongs to the chloroplast-specific ribosomal protein cL37 family. As to quaternary structure, part of the 50S ribosomal subunit.

Its subcellular location is the plastid. It localises to the chloroplast. The polypeptide is Large ribosomal subunit protein cL37 (PSRP5) (Pisum sativum (Garden pea)).